A 504-amino-acid polypeptide reads, in one-letter code: MSFSVDVLANIAIELQRGIGHQDRFQRLITTLRQVLECDASALLRYDSRQFIPLAIDGLAKDVLGRRFALEGHPRLEAIARAGDVVRFPADSELPDPYDGLIPGQESLKVHACVGLPLFAGQNLIGALTLDGMQPDQFDVFSDEELRLIAALAAGALSNALLIEQLESQNMLPGDAAPFEAVKQTQMIGLSPGMTQLKKEIEIVAASDLNVLISGETGTGKELVAKAIHEASPRAVNPLVYLNCAALPESVAESELFGHVKGAFTGAISNRSGKFEMADNGTLFLDEIGELSLALQAKLLRVLQYGDIQRVGDDRSLRVDVRVLAATNRDLREEVLAGRFRADLFHRLSVFPLSVPPLRERGDDVILLAGYFCEQCRLRQGLSRVVLSAGARNLLQHYSFPGNVRELEHAIHRAVVLARATRSGDEVILEAQHFAFPEVTLPPPEVAAVPVVKQNLREATEAFQRETIRQALAQNHHNWAACARMLETDVANLHRLAKRLGLKD.

D57 carries the 4-aspartylphosphate modification. The 230-residue stretch at 187-416 (MIGLSPGMTQ…LEHAIHRAVV (230 aa)) folds into the Sigma-54 factor interaction domain. Residues 215–222 (GETGTGKE) and 278–287 (ADNGTLFLDE) each bind ATP. The H-T-H motif DNA-binding region spans 479–498 (WAACARMLETDVANLHRLAK).

It functions in the pathway nitrogen metabolism; nitric oxide reduction. Functionally, required for the expression of anaerobic nitric oxide (NO) reductase, acts as a transcriptional activator for at least the norVW operon. Activation also requires sigma-54. This is Anaerobic nitric oxide reductase transcription regulator NorR from Escherichia coli O157:H7.